The chain runs to 306 residues: Peroxisome biogenesis factor 10 (306 aa).

Over 1 to 52 the chain is Peroxisomal matrix; that stretch reads MHLSAHIDPLQIILCTEIDEACIQFIKSQIEGIARACGPRMQANFEGVLIPY. The chain crosses the membrane as a helical span at residues 53-84; that stretch reads VDVLGKFLYRACCLRYATMGEEAARIVLAKQD. Over 85–147 the chain is Cytoplasmic; that stretch reads RSKGLVLATT…PEAVISKEKH (63 aa). A helical transmembrane segment spans residues 148–174; that stretch reads LVYILNSFKPILLKLVSIIRFLCLTMK. Over 175 to 202 the chain is Peroxisomal matrix; that stretch reads GHCATVSQLLLGLKYISLDEINPEEKKK. Residues 203–219 traverse the membrane as a helical segment; sequence VLTLLLLLGSRLIASIL. Over 220–306 the chain is Cytoplasmic; that stretch reads QHSNSYFDQH…SSPSKIILLR (87 aa). Positions 256, 259, 271, 273, 276, 279, 290, and 293 each coordinate Zn(2+). An RING-type zinc finger spans residues 256 to 294; it reads CSLCMEFIHCPAATECGHIFCWSCINGWTSKKSECPLCR.

Belongs to the pex2/pex10/pex12 family. As to quaternary structure, component of the PEX2-PEX10-PEX12 retrotranslocation channel, composed of PEX2, PEX10 and PEX12.

Its subcellular location is the peroxisome membrane. It catalyses the reaction S-ubiquitinyl-[E2 ubiquitin-conjugating enzyme]-L-cysteine + [acceptor protein]-L-lysine = [E2 ubiquitin-conjugating enzyme]-L-cysteine + N(6)-ubiquitinyl-[acceptor protein]-L-lysine.. It participates in protein modification; protein ubiquitination. Its activity is regulated as follows. The E3 ubiquitin-protein ligase activity is stimulated by PEX12. E3 ubiquitin-protein ligase component of a retrotranslocation channel required for peroxisome organization by mediating export of the PEX5 receptor from peroxisomes to the cytosol, thereby promoting PEX5 recycling. The retrotranslocation channel is composed of PEX2, PEX10 and PEX12; each subunit contributing transmembrane segments that coassemble into an open channel that specifically allows the passage of PEX5 through the peroxisomal membrane. PEX10 also regulates PEX5 recycling by acting as a E3 ubiquitin-protein ligase. When PEX5 recycling is compromised, PEX10 catalyzes polyubiquitination of PEX5 during its passage through the retrotranslocation channel, leading to its degradation. This is Peroxisome biogenesis factor 10 (pas4) from Schizosaccharomyces pombe (strain 972 / ATCC 24843) (Fission yeast).